The sequence spans 620 residues: Threonine--tRNA ligase (620 aa).

The region spanning 1–42 (MFEIAKGISNSLAKKSVGAKVDGKNVDMSYILDHDAEVEFID) is the TGS domain. A catalytic region spans residues 224 to 515 (DHRKLGKELE…LIEHYAGAFP (292 aa)). Residues Cys315, His366, and His492 each contribute to the Zn(2+) site.

It belongs to the class-II aminoacyl-tRNA synthetase family. Homodimer. It depends on Zn(2+) as a cofactor.

Its subcellular location is the cytoplasm. It carries out the reaction tRNA(Thr) + L-threonine + ATP = L-threonyl-tRNA(Thr) + AMP + diphosphate + H(+). In terms of biological role, catalyzes the attachment of threonine to tRNA(Thr) in a two-step reaction: L-threonine is first activated by ATP to form Thr-AMP and then transferred to the acceptor end of tRNA(Thr). Also edits incorrectly charged L-seryl-tRNA(Thr). The polypeptide is Threonine--tRNA ligase (Fusobacterium nucleatum subsp. nucleatum (strain ATCC 25586 / DSM 15643 / BCRC 10681 / CIP 101130 / JCM 8532 / KCTC 2640 / LMG 13131 / VPI 4355)).